A 131-amino-acid chain; its full sequence is Small ribosomal subunit protein bS6 (131 aa).

The disordered stretch occupies residues 99 to 131; the sequence is ASPMVKAKDERRERREDFATETNEDSDAGDSEE. Residues 104–116 show a composition bias toward basic and acidic residues; sequence KAKDERRERREDF. Residues 120–131 show a composition bias toward acidic residues; that stretch reads TNEDSDAGDSEE.

It belongs to the bacterial ribosomal protein bS6 family.

Functionally, binds together with bS18 to 16S ribosomal RNA. The chain is Small ribosomal subunit protein bS6 from Sodalis glossinidius (strain morsitans).